Reading from the N-terminus, the 129-residue chain is Protein Turandot A (129 aa).

The N-terminal stretch at 1-21 (MNSLTGFMCCALLLISPLCMG) is a signal peptide. Residue asparagine 49 is glycosylated (N-linked (GlcNAc...) asparagine).

It belongs to the Turandot family.

Its subcellular location is the secreted. In terms of biological role, a humoral factor that plays a role in stress tolerance; gives increased resistance to the lethal effects of bacterial challenge and stress. Regulated by the JAK/STAT pathway and NF-KB-like Relish pathway in the fat body, upd3 in the hemocytes and Mekk1 in response to septic injury and consequent immune response. The sequence is that of Protein Turandot A (TotA) from Drosophila yakuba (Fruit fly).